We begin with the raw amino-acid sequence, 320 residues long: Sucrose operon repressor (320 aa).

Residues 1–57 (MVAKLTDVAKLAGVSPTTVSRVINRKGYLSEKTITKVQAAMKTLGYKPNNLARSLQG) enclose the HTH lacI-type domain. The segment at residues 5-24 (LTDVAKLAGVSPTTVSRVIN) is a DNA-binding region (H-T-H motif).

Its function is as follows. Negative regulator of scrB expression. This is Sucrose operon repressor (scrR) from Streptococcus mutans serotype c (strain ATCC 700610 / UA159).